A 265-amino-acid chain; its full sequence is 6-carboxyhexanoate--CoA ligase (265 aa).

The protein belongs to the BioW family. As to quaternary structure, homodimer. It depends on Mg(2+) as a cofactor.

The catalysed reaction is heptanedioate + ATP + CoA = 6-carboxyhexanoyl-CoA + AMP + diphosphate. It participates in metabolic intermediate metabolism; pimeloyl-CoA biosynthesis; pimeloyl-CoA from pimelate: step 1/1. Its function is as follows. Catalyzes the transformation of pimelate into pimeloyl-CoA with concomitant hydrolysis of ATP to AMP. The polypeptide is 6-carboxyhexanoate--CoA ligase (Syntrophotalea carbinolica (strain DSM 2380 / NBRC 103641 / GraBd1) (Pelobacter carbinolicus)).